The following is a 1166-amino-acid chain: ATP-dependent helicase/deoxyribonuclease subunit B (1166 aa).

The UvrD-like helicase ATP-binding domain maps to 1-290 (MGMRFILGRS…DTLEGNFQNR (290 aa)). Position 8-15 (8-15 (GRSGTNKS)) interacts with ATP. One can recognise a UvrD-like helicase C-terminal domain in the interval 283 to 588 (LEGNFQNRPY…QFSHVPPSMD (306 aa)). [4Fe-4S] cluster is bound by residues C802, C1123, C1126, and C1132.

This sequence belongs to the helicase family. AddB/RexB type 1 subfamily. As to quaternary structure, heterodimer of AddA and AddB. Mg(2+) serves as cofactor. The cofactor is [4Fe-4S] cluster.

Its function is as follows. The heterodimer acts as both an ATP-dependent DNA helicase and an ATP-dependent, dual-direction single-stranded exonuclease. Recognizes the chi site generating a DNA molecule suitable for the initiation of homologous recombination. The AddB subunit has 5' -&gt; 3' nuclease activity but not helicase activity. The sequence is that of ATP-dependent helicase/deoxyribonuclease subunit B from Oceanobacillus iheyensis (strain DSM 14371 / CIP 107618 / JCM 11309 / KCTC 3954 / HTE831).